The following is a 78-amino-acid chain: Esculentin-2PLa (78 aa).

An N-terminal signal peptide occupies residues 1-22 (MFTTKKSMLLLFFLGTISLSLC). A propeptide spanning residues 23 to 39 (EEERGADEEEGDGEKLM) is cleaved from the precursor. A disulfide bond links cysteine 72 and cysteine 78.

As to expression, expressed by the skin glands.

It localises to the secreted. Antimicrobial activity against the Gram-negative bacterium E.coli, the Gram-positive bacterium S.aureus and the yeast C.albicans. The sequence is that of Esculentin-2PLa from Lithobates palustris (Pickerel frog).